A 1826-amino-acid polypeptide reads, in one-letter code: Transcription initiation factor TFIID subunit 1-like (1826 aa).

Disordered stretches follow at residues 118-141, 532-555, and 1252-1276; these read DESQ…YDED, IPDE…SSLK, and RLKR…MKER. Positions 1252–1268 are enriched in basic and acidic residues; that stretch reads RLKRNQEKEKLKGPPEK. Positions 1370–1377 match the Nuclear localization signal motif; that stretch reads PPKKKRRV. Bromo domains lie at 1395 to 1503 and 1517 to 1626; these read RRRT…LKEK and LLDD…ITEY. The segment at 1648–1826 is disordered; the sequence is AELESLDPMT…SGEHKDGHGK (179 aa). Over residues 1660 to 1700 the composition is skewed to polar residues; it reads PYTSQPPDMYDTNTSLSTSRDASVFQDESNLSVLDISTATP. Acidic residues-rich tracts occupy residues 1714–1729, 1740–1750, and 1768–1783; these read EDSD…EEED, GDGDLADEEEG, and EGED…EEGD. The span at 1787–1797 shows a compositional bias: polar residues; it reads SAIQLSESGSD. A compositionally biased stretch (basic and acidic residues) spans 1817–1826; the sequence is SGEHKDGHGK.

This sequence belongs to the TAF1 family. As to quaternary structure, can bind directly to TATA-box binding protein (TBP). Interacts (via bromo domains) with acetylated lysine residues on the N-terminus of histone H1.4, H2A, H2B, H3 and H4 (in vitro). In terms of tissue distribution, testis specific, expressed apparently in germ cells.

The protein localises to the nucleus. Its function is as follows. May act as a functional substitute for TAF1/TAFII250 during male meiosis, when sex chromosomes are transcriptionally silenced. The protein is Transcription initiation factor TFIID subunit 1-like (TAF1L) of Homo sapiens (Human).